The following is a 263-amino-acid chain: Undecaprenyl-diphosphatase (263 aa).

7 helical membrane-spanning segments follow: residues Arg-38–Leu-58, Arg-75–Val-95, Pro-108–Gly-128, Val-135–Pro-155, Phe-181–Met-201, Val-217–Ile-237, and Phe-242–Ala-262.

This sequence belongs to the UppP family.

It localises to the cell inner membrane. It carries out the reaction di-trans,octa-cis-undecaprenyl diphosphate + H2O = di-trans,octa-cis-undecaprenyl phosphate + phosphate + H(+). Catalyzes the dephosphorylation of undecaprenyl diphosphate (UPP). Confers resistance to bacitracin. This is Undecaprenyl-diphosphatase from Xanthomonas campestris pv. campestris (strain 8004).